The following is a 181-amino-acid chain: Adenine phosphoribosyltransferase (181 aa).

Belongs to the purine/pyrimidine phosphoribosyltransferase family. In terms of assembly, homodimer.

It is found in the cytoplasm. The enzyme catalyses AMP + diphosphate = 5-phospho-alpha-D-ribose 1-diphosphate + adenine. It participates in purine metabolism; AMP biosynthesis via salvage pathway; AMP from adenine: step 1/1. In terms of biological role, catalyzes a salvage reaction resulting in the formation of AMP, that is energically less costly than de novo synthesis. The protein is Adenine phosphoribosyltransferase of Shewanella amazonensis (strain ATCC BAA-1098 / SB2B).